Reading from the N-terminus, the 243-residue chain is Protein HUA2 (243 aa).

The protein resides in the cytoplasm. Functionally, may have a role in actin patch assembly. The polypeptide is Protein HUA2 (HUA2) (Saccharomyces cerevisiae (strain ATCC 204508 / S288c) (Baker's yeast)).